A 200-amino-acid chain; its full sequence is 3-isopropylmalate dehydratase small subunit (200 aa).

The protein belongs to the LeuD family. LeuD type 1 subfamily. In terms of assembly, heterodimer of LeuC and LeuD.

It catalyses the reaction (2R,3S)-3-isopropylmalate = (2S)-2-isopropylmalate. The protein operates within amino-acid biosynthesis; L-leucine biosynthesis; L-leucine from 3-methyl-2-oxobutanoate: step 2/4. In terms of biological role, catalyzes the isomerization between 2-isopropylmalate and 3-isopropylmalate, via the formation of 2-isopropylmaleate. This chain is 3-isopropylmalate dehydratase small subunit, found in Yersinia pseudotuberculosis serotype I (strain IP32953).